The chain runs to 296 residues: Probable lipid kinase YegS-like (296 aa).

In terms of domain architecture, DAGKc spans 1–130 (MPHTLLILNG…IDLAQVNGEH (130 aa)). Residues T37, 63 to 69 (GDGTINE), and T92 each bind ATP. Mg(2+) is bound by residues L212, D215, and L217. Residue E268 is the Proton acceptor of the active site.

The protein belongs to the diacylglycerol/lipid kinase family. YegS lipid kinase subfamily. It depends on Mg(2+) as a cofactor. Requires Ca(2+) as cofactor.

It is found in the cytoplasm. Its function is as follows. Probably phosphorylates lipids; the in vivo substrate is unknown. This Yersinia pestis bv. Antiqua (strain Angola) protein is Probable lipid kinase YegS-like.